The following is a 122-amino-acid chain: MIQRESRLVVADNSGAKEVLVINILGGSTGFYANIGDIVIVTVKKAISSGAIKAGDVLKAVIVRTKYGLRRKDGSYIKFDENAVVIIKDDLTPRGTRIFGSIARELREKKFTKIISLAQEVL.

Belongs to the universal ribosomal protein uL14 family. As to quaternary structure, part of the 50S ribosomal subunit. Forms a cluster with proteins L3 and L19. In the 70S ribosome, L14 and L19 interact and together make contacts with the 16S rRNA in bridges B5 and B8.

In terms of biological role, binds to 23S rRNA. Forms part of two intersubunit bridges in the 70S ribosome. This is Large ribosomal subunit protein uL14 from Phytoplasma mali (strain AT).